Here is a 150-residue protein sequence, read N- to C-terminus: Small ribosomal subunit protein uS11 (150 aa).

The segment at 126–150 (GRIEDVTPTPSDSTRRKGGRRGRRL) is disordered. Residues 141–150 (RKGGRRGRRL) show a composition bias toward basic residues.

This sequence belongs to the universal ribosomal protein uS11 family. Component of the small ribosomal subunit (SSU). Mature N.crassa ribosomes consist of a small (40S) and a large (60S) subunit. The 40S small subunit contains 1 molecule of ribosomal RNA (18S rRNA) and at least 32 different proteins. The large 60S subunit contains 3 rRNA molecules (26S, 5.8S and 5S rRNA) and at least 42 different proteins.

The protein localises to the cytoplasm. Functionally, component of the ribosome, a large ribonucleoprotein complex responsible for the synthesis of proteins in the cell. The small ribosomal subunit (SSU) binds messenger RNAs (mRNAs) and translates the encoded message by selecting cognate aminoacyl-transfer RNA (tRNA) molecules. The large subunit (LSU) contains the ribosomal catalytic site termed the peptidyl transferase center (PTC), which catalyzes the formation of peptide bonds, thereby polymerizing the amino acids delivered by tRNAs into a polypeptide chain. The nascent polypeptides leave the ribosome through a tunnel in the LSU and interact with protein factors that function in enzymatic processing, targeting, and the membrane insertion of nascent chains at the exit of the ribosomal tunnel. uS11 is involved in nucleolar processing of pre-18S ribosomal RNA and ribosome assembly. The sequence is that of Small ribosomal subunit protein uS11 (rps-14) from Neurospora crassa (strain ATCC 24698 / 74-OR23-1A / CBS 708.71 / DSM 1257 / FGSC 987).